The following is a 237-amino-acid chain: Oligoribonuclease, mitochondrial (237 aa).

Residues 1 to 25 (MLGGSLGSRLLRGVGGSHGRFGARG) constitute a mitochondrion transit peptide. Residues 43 to 207 (MVWVDLEMTG…DDISESIKEL (165 aa)) form the Exonuclease domain. The Mg(2+) site is built by aspartate 47 and glutamate 49. Serine 92 carries the post-translational modification Phosphoserine. Tyrosine 122 is subject to Phosphotyrosine. Aspartate 147 provides a ligand contact to Mg(2+). An N6-acetyllysine modification is found at lysine 173. Histidine 194 is an active-site residue. Mg(2+) is bound at residue aspartate 199.

The protein belongs to the oligoribonuclease family. In terms of assembly, homodimer. Homotetramer. Mn(2+) serves as cofactor. It depends on Mg(2+) as a cofactor. As to expression, highly expressed in the heart and at lower levels in the lymph nodes, brain, lung, liver, spleen and thymus.

The protein resides in the mitochondrion intermembrane space. Its subcellular location is the mitochondrion matrix. The protein localises to the mitochondrion. It localises to the cytoplasm. It is found in the nucleus. Inhibited by adenosine 3',5'-bisphosphate. Its function is as follows. 3'-to-5'exoribonuclease that preferentially degrades DNA and RNA oligonucleotides composed of only two nucleotides. Binds and degrades longer oligonucleotides with a lower affinity. Plays dual roles in mitochondria, scavenging nanoRNAs (small RNA oligonucleotides of &lt;5 nucleotides) that are produced by the degradosome and clearing short RNAs that are generated by RNA processing. Essential for correct initiation of mitochondrial transcription, degrading mitochondrial RNA dinucleotides to prevent RNA-primed transcription at non-canonical sites in the mitochondrial genome. Essential for embryonic development. 3'-to-5'exoribonuclease that preferentially degrades DNA and RNA oligonucleotides composed of only two nucleotides. The protein is Oligoribonuclease, mitochondrial (REXO2) of Homo sapiens (Human).